The following is a 427-amino-acid chain: Serine--tRNA ligase (427 aa).

Position 231-233 (231-233 (TAE)) interacts with L-serine. Residues 262–264 (RRE) and valine 278 contribute to the ATP site. Glutamate 285 is an L-serine binding site. 349 to 352 (EVSS) contacts ATP. Serine 384 lines the L-serine pocket.

Belongs to the class-II aminoacyl-tRNA synthetase family. Type-1 seryl-tRNA synthetase subfamily. Homodimer. The tRNA molecule binds across the dimer.

Its subcellular location is the cytoplasm. It carries out the reaction tRNA(Ser) + L-serine + ATP = L-seryl-tRNA(Ser) + AMP + diphosphate + H(+). It catalyses the reaction tRNA(Sec) + L-serine + ATP = L-seryl-tRNA(Sec) + AMP + diphosphate + H(+). It functions in the pathway aminoacyl-tRNA biosynthesis; selenocysteinyl-tRNA(Sec) biosynthesis; L-seryl-tRNA(Sec) from L-serine and tRNA(Sec): step 1/1. In terms of biological role, catalyzes the attachment of serine to tRNA(Ser). Is also able to aminoacylate tRNA(Sec) with serine, to form the misacylated tRNA L-seryl-tRNA(Sec), which will be further converted into selenocysteinyl-tRNA(Sec). The sequence is that of Serine--tRNA ligase from Chlamydia pneumoniae (Chlamydophila pneumoniae).